The following is a 247-amino-acid chain: MSSHILFEHPLNEKMRTWLRIEFLIQQMSFHLPIAEHATALHFFRNVGDLLDVIERGDVRTELLKELERQQRKLQGWAEVPGVDQNRIDSIRLQLKQSSTILMAAPRVGQFLREDRLIGLVRQRLSIPGGCCSFDLPTLHIWLHMSQEQRDAQVKNWMGSLEPMNQALTLILDLVRNSAPFRKQTSLNGFYHDNGDDADLLRLQLSLGDQLYPQISGHKSRFAIRFMPLDSENGSVPERLDFELACC.

It belongs to the ZapD family. As to quaternary structure, interacts with FtsZ.

The protein resides in the cytoplasm. Its function is as follows. Cell division factor that enhances FtsZ-ring assembly. Directly interacts with FtsZ and promotes bundling of FtsZ protofilaments, with a reduction in FtsZ GTPase activity. This Enterobacter sp. (strain 638) protein is Cell division protein ZapD.